The following is a 408-amino-acid chain: Broad specificity amino-acid racemase (408 aa).

Positions 1–24 (MNFKKTLLSIAIASASLTPAFSYS) are cleaved as a signal peptide. Cys71 and Cys97 are oxidised to a cystine. The active-site Proton acceptor is Lys75. Lys75 bears the N6-(pyridoxal phosphate)lysine mark. Arg174 is a substrate binding site. Tyr300 functions as the Proton acceptor in the catalytic mechanism. Substrate is bound at residue Met348.

Belongs to the alanine racemase family. Bsr subfamily. Pyridoxal 5'-phosphate serves as cofactor.

The protein localises to the periplasm. It catalyses the reaction an L-alpha-amino acid = a D-alpha-amino acid. The catalysed reaction is L-lysine = D-lysine. It carries out the reaction L-arginine = D-arginine. Its function is as follows. Amino-acid racemase able to utilize a broad range of substrates. The sequence is that of Broad specificity amino-acid racemase (alr) from Vibrio vulnificus (strain CMCP6).